Reading from the N-terminus, the 521-residue chain is Na(+)/H(+) antiporter ApNhaP (521 aa).

Residues 1–18 lie on the Periplasmic side of the membrane; it reads MTIEAAMGEEAIKENLEQ. The chain crosses the membrane as a helical span at residues 19-39; it reads FLIVLSVSLGVATLSQISSFF. Over 40-41 the chain is Cytoplasmic; that stretch reads RQ. A helical transmembrane segment spans residues 42 to 62; sequence IPYTLLLVIVGLGLAFVDIRL. Topologically, residues 63–94 are periplasmic; that stretch reads VNLSPELILEIFLPPLLFEAAWNIRWRNLKKN. Residues 95 to 115 traverse the membrane as a helical segment; sequence LFPVVLLAIIGVVISVVGIGF. Topologically, residues 116-126 are cytoplasmic; it reads SLNYFSGLSLP. The helical transmembrane segment at 127–147 threads the bilayer; sequence IALLVGAILAATDPVSVIALF. At 148–164 the chain is on the periplasmic side; it reads RELGVGERLTVLMEGES. A helical membrane pass occupies residues 165 to 185; the sequence is LFNDGVAVVAFSLLVGIPLGT. Residues 186–194 lie on the Cytoplasmic side of the membrane; it reads QEFSVTNTL. A helical membrane pass occupies residues 195–215; the sequence is IQFVTLQGIGIGCGGVIGFGI. The Periplasmic segment spans residues 216–245; that stretch reads SYLTQRFDLPLVEQSLTLVSAYGTYLITEE. Residues 246–266 form a helical membrane-spanning segment; that stretch reads LGGSGVIGVVTVGLILGNFGS. Residues 267–276 lie on the Cytoplasmic side of the membrane; that stretch reads RIGMNPRTRL. The chain crosses the membrane as a helical span at residues 277–297; the sequence is LVSEFWEFIAFFVNSIVFLLI. The Periplasmic segment spans residues 298 to 311; the sequence is GDQINIRGLADNGQ. Residues 312–332 traverse the membrane as a helical segment; the sequence is LILITIIALVIIRAISIYGLG. The Cytoplasmic portion of the chain corresponds to 333–349; the sequence is TISNLITKQDISWQEET. Residues 350–370 traverse the membrane as a helical segment; sequence VLWWGGLRGSVSIALALSVPV. The Periplasmic segment spans residues 371-380; the sequence is MLDGRQDIIE. The helical transmembrane segment at 381-401 threads the bilayer; that stretch reads AVFGVVLFTLLVQGLTMQTVI. The Cytoplasmic segment spans residues 402–521; that stretch reads EKLGLIGDRA…LLQEVLAKPE (120 aa).

This sequence belongs to the monovalent cation:proton antiporter 1 (CPA1) transporter (TC 2.A.36) family.

The protein localises to the cell inner membrane. In terms of biological role, na(+)/H(+) antiporter that extrudes sodium in exchange for external protons. Also shows high Ca(2+)/H(+) antiporter activity at alkaline pH. Does not catalyze exchange between Li(+) and H(+). This Aphanothece halophytica protein is Na(+)/H(+) antiporter ApNhaP (apnhaP).